The following is a 712-amino-acid chain: 1,4-alpha-glucan branching enzyme GlgB (712 aa).

The Nucleophile role is filled by Asp-397. The active-site Proton donor is Glu-450.

This sequence belongs to the glycosyl hydrolase 13 family. GlgB subfamily. As to quaternary structure, monomer.

It carries out the reaction Transfers a segment of a (1-&gt;4)-alpha-D-glucan chain to a primary hydroxy group in a similar glucan chain.. Its pathway is glycan biosynthesis; glycogen biosynthesis. Catalyzes the formation of the alpha-1,6-glucosidic linkages in glycogen by scission of a 1,4-alpha-linked oligosaccharide from growing alpha-1,4-glucan chains and the subsequent attachment of the oligosaccharide to the alpha-1,6 position. This is 1,4-alpha-glucan branching enzyme GlgB from Bradyrhizobium sp. (strain BTAi1 / ATCC BAA-1182).